We begin with the raw amino-acid sequence, 122 residues long: ATP-dependent Clp protease adapter protein ClpS (122 aa).

The tract at residues 1-27 (MVRMATKPPSMTPTPPTGAPPRDDGGS) is disordered. Residues 10 to 19 (SMTPTPPTGA) are compositionally biased toward pro residues.

The protein belongs to the ClpS family. In terms of assembly, binds to the N-terminal domain of the chaperone ClpA.

Its function is as follows. Involved in the modulation of the specificity of the ClpAP-mediated ATP-dependent protein degradation. This is ATP-dependent Clp protease adapter protein ClpS from Paracidovorax citrulli (strain AAC00-1) (Acidovorax citrulli).